Here is a 117-residue protein sequence, read N- to C-terminus: Ig heavy chain V region MOPC 104E (117 aa).

The region spanning 1–116 (EVQLQQSGPE…WGAGTTVTVS (116 aa)) is the Ig-like domain. C22 and C96 are disulfide-bonded. The N-linked (GlcNAc...) (high mannose) asparagine; atypical glycan is linked to N55.

The protein is Ig heavy chain V region MOPC 104E of Mus musculus (Mouse).